A 341-amino-acid chain; its full sequence is HTH-type transcriptional repressor PurR (341 aa).

Residues 2-56 (ATIKDVAKHAGVSTTTVSHVINKTRFVAENTKAAVWAAIKELHYSPSAVARSLKV) enclose the HTH lacI-type domain. Positions 4-23 (IKDVAKHAGVSTTTVSHVIN) form a DNA-binding region, H-T-H motif. A DNA-binding region spans residues 48 to 56 (SAVARSLKV). Residues Y73, R190, T192, F221, and D275 each contribute to the hypoxanthine site.

Homodimer.

Its pathway is purine metabolism; purine nucleotide biosynthesis [regulation]. Is the main repressor of the genes involved in the de novo synthesis of purine nucleotides, regulating purB, purC, purEK, purF, purHD, purL, purMN and guaBA expression. PurR is allosterically activated to bind its cognate DNA by binding the purine corepressors, hypoxanthine or guanine, thereby effecting transcription repression. The protein is HTH-type transcriptional repressor PurR of Yersinia enterocolitica serotype O:8 / biotype 1B (strain NCTC 13174 / 8081).